We begin with the raw amino-acid sequence, 373 residues long: 4-hydroxy-3-methylbut-2-en-1-yl diphosphate synthase (flavodoxin) (373 aa).

The [4Fe-4S] cluster site is built by cysteine 270, cysteine 273, cysteine 305, and glutamate 312.

This sequence belongs to the IspG family. It depends on [4Fe-4S] cluster as a cofactor.

It catalyses the reaction (2E)-4-hydroxy-3-methylbut-2-enyl diphosphate + oxidized [flavodoxin] + H2O + 2 H(+) = 2-C-methyl-D-erythritol 2,4-cyclic diphosphate + reduced [flavodoxin]. It participates in isoprenoid biosynthesis; isopentenyl diphosphate biosynthesis via DXP pathway; isopentenyl diphosphate from 1-deoxy-D-xylulose 5-phosphate: step 5/6. In terms of biological role, converts 2C-methyl-D-erythritol 2,4-cyclodiphosphate (ME-2,4cPP) into 1-hydroxy-2-methyl-2-(E)-butenyl 4-diphosphate. This Pectobacterium atrosepticum (strain SCRI 1043 / ATCC BAA-672) (Erwinia carotovora subsp. atroseptica) protein is 4-hydroxy-3-methylbut-2-en-1-yl diphosphate synthase (flavodoxin).